The chain runs to 256 residues: Pimeloyl-[acyl-carrier protein] methyl ester esterase (256 aa).

Residues 15–242 (HLVLLHGWGL…AAHAPFISHP (228 aa)) form the AB hydrolase-1 domain. Substrate-binding positions include Trp-22, 82-83 (SL), and 143-147 (FLALQ). The active-site Nucleophile is Ser-82. Active-site residues include Asp-207 and His-235. Residue His-235 participates in substrate binding.

The protein belongs to the AB hydrolase superfamily. Carboxylesterase BioH family. Monomer.

The protein localises to the cytoplasm. The enzyme catalyses 6-carboxyhexanoyl-[ACP] methyl ester + H2O = 6-carboxyhexanoyl-[ACP] + methanol + H(+). It functions in the pathway cofactor biosynthesis; biotin biosynthesis. In terms of biological role, the physiological role of BioH is to remove the methyl group introduced by BioC when the pimeloyl moiety is complete. It allows to synthesize pimeloyl-ACP via the fatty acid synthetic pathway through the hydrolysis of the ester bonds of pimeloyl-ACP esters. In Escherichia coli (strain 55989 / EAEC), this protein is Pimeloyl-[acyl-carrier protein] methyl ester esterase.